Here is a 78-residue protein sequence, read N- to C-terminus: Protein SlyX homolog (78 aa).

The protein belongs to the SlyX family.

This is Protein SlyX homolog from Xylella fastidiosa (strain M23).